A 320-amino-acid polypeptide reads, in one-letter code: MKVLWAAFLVAFLAGCQGKVEQVVEPELGPEPELHPQADWQSGQPWELALGRFWDYLRWVQTLSEQVQEELLSSQVTQELTALMDETMKELKAYKSELEEQLSPVAEETRARLSKELQAAQARLGADMEDVRSRLAQYRSEVQAMLGQSTDELRARLASHLRKLRKRLLRDVDDLQKRLAVYQAGAREGAERGVSAIRERLGPLVEQGRARAATVGSSLASQPLQERAQAWGERLRARMEEVGSRTRDRLDEVKEQVEEVRAKLEEQAQQMRLQAEAFQARLKSWFEPLVEDMQRQWAGLVEKVQAAVGASATPVPSDNH.

The N-terminal stretch at 1 to 18 is a signal peptide; the sequence is MKVLWAAFLVAFLAGCQG. 8 tandem repeats follow at residues 82–103, 104–125, 126–147, 148–169, 170–191, 192–213, 214–236, and 237–258. The tract at residues 82–199 is 8 X 22 AA approximate tandem repeats; it reads ALMDETMKEL…AERGVSAIRE (118 aa). Methionine sulfoxide is present on Met145. Phosphoserine is present on Ser149. Positions 160–170 are LDL and other lipoprotein receptors binding; that stretch reads HLRKLRKRLLR. 164–167 is a binding site for heparin; sequence LRKR. The lipid-binding and lipoprotein association stretch occupies residues 212-293; sequence AATVGSSLAS…SWFEPLVEDM (82 aa). Position 232–239 (232–239) interacts with heparin; that stretch reads GERLRARM. Positions 269-320 are homooligomerization; the sequence is QQMRLQAEAFQARLKSWFEPLVEDMQRQWAGLVEKVQAAVGASATPVPSDNH. The interval 281 to 293 is specificity for association with VLDL; that stretch reads RLKSWFEPLVEDM.

It belongs to the apolipoprotein A1/A4/E family. As to quaternary structure, homotetramer. May interact with ABCA1; functionally associated with ABCA1 in the biogenesis of HDLs. May interact with APP/A4 amyloid-beta peptide; the interaction is extremely stable in vitro but its physiological significance is unclear. May interact with MAPT. May interact with MAP2. In the cerebrospinal fluid, interacts with secreted SORL1. Interacts with PMEL; this allows the loading of PMEL luminal fragment on ILVs to induce fibril nucleation. APOE exists as multiple glycosylated and sialylated glycoforms within cells and in plasma. The extent of glycosylation and sialylation are tissue and context specific. In terms of processing, glycated in plasma VLDL. Post-translationally, phosphorylated by FAM20C in the extracellular medium.

Its subcellular location is the secreted. The protein localises to the extracellular space. It is found in the extracellular matrix. The protein resides in the extracellular vesicle. It localises to the endosome. Its subcellular location is the multivesicular body. APOE is an apolipoprotein, a protein associating with lipid particles, that mainly functions in lipoprotein-mediated lipid transport between organs via the plasma and interstitial fluids. APOE is a core component of plasma lipoproteins and is involved in their production, conversion and clearance. Apolipoproteins are amphipathic molecules that interact both with lipids of the lipoprotein particle core and the aqueous environment of the plasma. As such, APOE associates with chylomicrons, chylomicron remnants, very low density lipoproteins (VLDL) and intermediate density lipoproteins (IDL) but shows a preferential binding to high-density lipoproteins (HDL). It also binds a wide range of cellular receptors including the LDL receptor/LDLR, the LDL receptor-related proteins LRP1, LRP2 and LRP8 and the very low-density lipoprotein receptor/VLDLR that mediate the cellular uptake of the APOE-containing lipoprotein particles. Finally, APOE also has a heparin-binding activity and binds heparan-sulfate proteoglycans on the surface of cells, a property that supports the capture and the receptor-mediated uptake of APOE-containing lipoproteins by cells. A main function of APOE is to mediate lipoprotein clearance through the uptake of chylomicrons, VLDLs, and HDLs by hepatocytes. APOE is also involved in the biosynthesis by the liver of VLDLs as well as their uptake by peripheral tissues ensuring the delivery of triglycerides and energy storage in muscle, heart and adipose tissues. By participating in the lipoprotein-mediated distribution of lipids among tissues, APOE plays a critical role in plasma and tissues lipid homeostasis. APOE is also involved in two steps of reverse cholesterol transport, the HDLs-mediated transport of cholesterol from peripheral tissues to the liver, and thereby plays an important role in cholesterol homeostasis. First, it is functionally associated with ABCA1 in the biogenesis of HDLs in tissues. Second, it is enriched in circulating HDLs and mediates their uptake by hepatocytes. APOE also plays an important role in lipid transport in the central nervous system, regulating neuron survival and sprouting. The protein is Apolipoprotein E (APOE) of Saimiri boliviensis boliviensis (Bolivian squirrel monkey).